A 297-amino-acid chain; its full sequence is Bilin biosynthesis protein MpeU (297 aa).

This sequence belongs to the CpcE/RpcE/PecE family.

An enzyme involved in the biosynthesis of bilin. This chain is Bilin biosynthesis protein MpeU (mpeU), found in Synechococcus sp. (strain WH8020).